Here is an 81-residue protein sequence, read N- to C-terminus: Large ribosomal subunit protein bL31 (81 aa).

Residues C16, C18, C36, and C39 each contribute to the Zn(2+) site.

This sequence belongs to the bacterial ribosomal protein bL31 family. Type A subfamily. Part of the 50S ribosomal subunit. Zn(2+) is required as a cofactor.

Functionally, binds the 23S rRNA. The sequence is that of Large ribosomal subunit protein bL31 from Rhodopirellula baltica (strain DSM 10527 / NCIMB 13988 / SH1).